The chain runs to 418 residues: Actin-related protein 3-A (418 aa).

It belongs to the actin family. ARP3 subfamily. As to quaternary structure, component of the Arp2/3 complex composed of actr2/arp2, actr3/arp3, arpc1 (arpc1a or arpc1b), arpc2, arpc3, arpc4 and arpc5.

The protein localises to the cytoplasm. Its subcellular location is the cytoskeleton. It is found in the cell projection. The protein resides in the nucleus. ATP-binding component of the Arp2/3 complex, a multiprotein complex that mediates actin polymerization upon stimulation by nucleation-promoting factor (NPF). The Arp2/3 complex mediates the formation of branched actin networks in the cytoplasm, providing the force for cell motility. Seems to contact the pointed end of the daughter actin filament. In addition to its role in the cytoplasmic cytoskeleton, the Arp2/3 complex also promotes actin polymerization in the nucleus, thereby regulating gene transcription and repair of damaged DNA. The Arp2/3 complex promotes homologous recombination (HR) repair in response to DNA damage by promoting nuclear actin polymerization, leading to drive motility of double-strand breaks (DSBs). In Xenopus laevis (African clawed frog), this protein is Actin-related protein 3-A.